The following is a 504-amino-acid chain: Glucose-6-phosphate isomerase (504 aa).

E333 functions as the Proton donor in the catalytic mechanism. Active-site residues include H364 and K473.

This sequence belongs to the GPI family.

The protein resides in the cytoplasm. It catalyses the reaction alpha-D-glucose 6-phosphate = beta-D-fructose 6-phosphate. The protein operates within carbohydrate biosynthesis; gluconeogenesis. Its pathway is carbohydrate degradation; glycolysis; D-glyceraldehyde 3-phosphate and glycerone phosphate from D-glucose: step 2/4. Functionally, catalyzes the reversible isomerization of glucose-6-phosphate to fructose-6-phosphate. The sequence is that of Glucose-6-phosphate isomerase from Stenotrophomonas maltophilia (strain R551-3).